The sequence spans 487 residues: Lysophospholipid acyltransferase 5 (487 aa).

The residue at position 2 (A2) is an N-acetylalanine. 6 helical membrane-spanning segments follow: residues 44–64, 67–87, 111–131, 178–198, 236–256, and 285–305; these read LIFS…YLFY, SYLI…FNFG, ITAV…GYYY, ILGV…GAFL, LGLV…EDYL, and VTCW…FNGF. Residue N308 is glycosylated (N-linked (GlcNAc...) asparagine). Catalysis depends on residues N338 and H374. The next 3 membrane-spanning stretches (helical) occupy residues 364 to 384, 422 to 442, and 453 to 473; these read GLSL…LICF, LVQQ…FCLF, and SIYF…PYVY. A Di-lysine motif motif is present at residues 484-487; that stretch reads KKRE.

Belongs to the membrane-bound acyltransferase family.

The protein resides in the endoplasmic reticulum membrane. It catalyses the reaction a 1-acyl-sn-glycero-3-phosphocholine + an acyl-CoA = a 1,2-diacyl-sn-glycero-3-phosphocholine + CoA. It carries out the reaction a 1-acyl-sn-glycero-3-phosphoethanolamine + an acyl-CoA = a 1,2-diacyl-sn-glycero-3-phosphoethanolamine + CoA. The enzyme catalyses a 1-acyl-sn-glycero-3-phospho-L-serine + an acyl-CoA = a 1,2-diacyl-sn-glycero-3-phospho-L-serine + CoA. The catalysed reaction is (9Z,12Z)-octadecadienoyl-CoA + a 1-acyl-sn-glycero-3-phosphocholine = 1-acyl-2-(9Z,12Z)-octadecadienoyl-sn-glycero-3-phosphocholine + CoA. It catalyses the reaction (5Z,8Z,11Z,14Z)-eicosatetraenoyl-CoA + a 1-acyl-sn-glycero-3-phosphocholine = 1-acyl-2-(5Z,8Z,11Z,14Z-eicosatetraenoyl)-sn-glycero-3-phosphocholine + CoA. It carries out the reaction dodecanoyl-CoA + 1-hexadecanoyl-sn-glycero-3-phosphocholine = 1-hexadecanoyl-2-dodecanoyl-sn-glycero-3-phosphocholine + CoA. The enzyme catalyses octadecanoyl-CoA + 1-hexadecanoyl-sn-glycero-3-phosphocholine = 1-hexadecanoyl-2-octadecanoyl-sn-glycero-3-phosphocholine + CoA. The catalysed reaction is 1-dodecanoyl-sn-glycero-3-phosphocholine + hexadecanoyl-CoA = 1-dodecanoyl-2-hexadecanoyl-sn-glycero-3-phosphocholine + CoA. It catalyses the reaction 1-tetradecanoyl-sn-glycero-3-phosphocholine + hexadecanoyl-CoA = 1-tetradecanoyl-2-hexadecanoyl-sn-glycero-3-phosphocholine + CoA. It carries out the reaction 1-hexadecanoyl-sn-glycero-3-phosphocholine + hexadecanoyl-CoA = 1,2-dihexadecanoyl-sn-glycero-3-phosphocholine + CoA. The enzyme catalyses 1-octadecanoyl-sn-glycero-3-phosphocholine + hexadecanoyl-CoA = 1-octadecanoyl-2-hexadecanoyl-sn-glycero-3-phosphocholine + CoA. The catalysed reaction is 1-(9Z-octadecenoyl)-sn-glycero-3-phosphocholine + hexadecanoyl-CoA = 1-(9Z-octadecenoyl)-2-hexadecanoyl-sn-glycero-3-phosphocholine + CoA. It catalyses the reaction (9Z)-hexadecenoyl-CoA + 1-hexadecanoyl-sn-glycero-3-phosphocholine = 1-hexadecanoyl-2-(9Z-hexadecenoyl)-sn-glycero-3-phosphocholine + CoA. It carries out the reaction 1-hexadecanoyl-sn-glycero-3-phosphocholine + (9Z)-octadecenoyl-CoA = 1-hexadecanoyl-2-(9Z-octadecenoyl)-sn-glycero-3-phosphocholine + CoA. The enzyme catalyses (9Z,12Z)-octadecadienoyl-CoA + 1-hexadecanoyl-sn-glycero-3-phosphocholine = 1-hexadecanoyl-2-(9Z,12Z-octadecadienoyl)-sn-glycero-3-phosphocholine + CoA. The catalysed reaction is 1-dodecanoyl-sn-glycero-3-phosphocholine + (5Z,8Z,11Z,14Z)-eicosatetraenoyl-CoA = 1-dodecanoyl-2-(5Z,8Z,11Z,14Z)-eicosatetraenoyl-sn-glycero-3-phosphocholine + CoA. It catalyses the reaction (5Z,8Z,11Z,14Z)-eicosatetraenoyl-CoA + 1-hexadecanoyl-sn-glycero-3-phosphocholine = 1-hexadecanoyl-2-(5Z,8Z,11Z,14Z-eicosatetraenoyl)-sn-glycero-3-phosphocholine + CoA. It carries out the reaction 1-octadecanoyl-sn-glycero-3-phosphocholine + (5Z,8Z,11Z,14Z)-eicosatetraenoyl-CoA = 1-octadecanoyl-2-(5Z,8Z,11Z,14Z-eicosatetraenoyl)-sn-glycero-3-phosphocholine + CoA. The enzyme catalyses 1-eicosanoyl-sn-glycero-3-phosphocholine + (5Z,8Z,11Z,14Z)-eicosatetraenoyl-CoA = 1-eicosanoyl-2-(5Z,8Z,11Z,14Z)-eicosatetraenoyl-sn-glycero-3-phosphocholine + CoA. The catalysed reaction is 1-(9Z-octadecenoyl)-sn-glycero-3-phosphocholine + (9Z)-octadecenoyl-CoA = 1,2-di-(9Z-octadecenoyl)-sn-glycero-3-phosphocholine + CoA. It catalyses the reaction 1-(9Z-octadecenoyl)-sn-glycero-3-phosphocholine + (9Z,12Z)-octadecadienoyl-CoA = 1-(9Z)-octadecenoyl-2-(9Z,12Z)-octadecadienoyl-sn-glycero-3-phosphocholine + CoA. It carries out the reaction 1-(9Z-octadecenoyl)-sn-glycero-3-phosphocholine + (5Z,8Z,11Z,14Z)-eicosatetraenoyl-CoA = 1-(9Z)-octadecenoyl-2-(5Z,8Z,11Z,14Z)-icosatetraenoyl-sn-glycero-3-phosphocholine + CoA. The enzyme catalyses a 1-acyl-sn-glycero-3-phosphoethanolamine + (9Z,12Z)-octadecadienoyl-CoA = 1-acyl-2-(9Z,12Z)-octadecadienoyl-sn-glycero-3-phosphoethanolamine + CoA. The catalysed reaction is 1-(9Z-octadecenoyl)-sn-glycero-3-phosphoethanolamine + (9Z,12Z)-octadecadienoyl-CoA = 1-(9Z)-octadecenoyl-2-(9Z,12Z)-octadecadienoyl-sn-glycero-3-phosphoethanolamine + CoA. It catalyses the reaction 1-(10Z-heptadecenoyl)-sn-glycero-3-phosphoethanolamine + (9Z,12Z)-octadecadienoyl-CoA = 1-(10Z-heptadecenoyl)-2-(9Z,12Z-octadecadienoyl)-sn-glycero-3-phosphoethanolamine + CoA. It carries out the reaction a 1-acyl-sn-glycero-3-phosphoethanolamine + (5Z,8Z,11Z,14Z)-eicosatetraenoyl-CoA = 1-acyl-2-(5Z,8Z,11Z,14Z)-eicosatetraenoyl-sn-glycero-3-phosphoethanolamine + CoA. The enzyme catalyses 1-hexadecanoyl-sn-glycero-3-phosphoethanolamine + (5Z,8Z,11Z,14Z)-eicosatetraenoyl-CoA = 1-hexadecanoyl-2-(5Z,8Z,11Z,14Z-eicosatetraenoyl)-sn-glycero-3-phosphoethanolamine + CoA. The catalysed reaction is 1-(9Z-octadecenoyl)-sn-glycero-3-phosphoethanolamine + (5Z,8Z,11Z,14Z)-eicosatetraenoyl-CoA = 1-(9Z)-octadecenoyl-2-(5Z,8Z,11Z,14Z)-eicosatetraenoyl-sn-glycero-3-phosphoethanolamine + CoA. It catalyses the reaction 1-(10Z-heptadecenoyl)-sn-glycero-3-phosphoethanolamine + (5Z,8Z,11Z,14Z)-eicosatetraenoyl-CoA = 1-(10Z-heptadecenoyl)-2-(5Z,8Z,11Z,14Z-eicosatetraenoyl)-sn-glycero-3-phosphoethanolamine + CoA. It carries out the reaction a 1-O-(1Z-alkenyl)-sn-glycero-3-phosphoethanolamine + (5Z,8Z,11Z,14Z)-eicosatetraenoyl-CoA = 1-O-(1Z)-alkenyl-2-(5Z,8Z,11Z,14Z)-eicosatetraenoyl-sn-glycero-3-phosphoethanolamine + CoA. The enzyme catalyses a 1-acyl-sn-glycero-3-phospho-L-serine + (9Z,12Z)-octadecadienoyl-CoA = 1-acyl-2-(9Z,12Z-octadecadienoyl)-sn-glycero-3-phospho-L-serine + CoA. The catalysed reaction is a 1-acyl-sn-glycero-3-phospho-L-serine + (5Z,8Z,11Z,14Z)-eicosatetraenoyl-CoA = 1-acyl-2-(5Z,8Z,11Z,14Z-eicosatetraenoyl)-sn-glycero-3-phospho-L-serine + CoA. It catalyses the reaction 1-hexadecanoyl-sn-glycero-3-phospho-L-serine + (9Z)-octadecenoyl-CoA = 1-hexadecanoyl-2-(9Z-octadecenoyl)-sn-glycero-3-phospho-L-serine + CoA. It carries out the reaction 1-(9Z-octadecenoyl)-sn-glycero-3-phospho-L-serine + (9Z)-octadecenoyl-CoA = 1,2-di-(9Z)-octadecenoyl-sn-glycero-3-phospho-L-serine + CoA. The enzyme catalyses 1-hexadecanoyl-sn-glycero-3-phospho-L-serine + (9Z,12Z)-octadecadienoyl-CoA = 1-hexadecanoyl-2-(9Z,12Z-octadecadienoyl)-sn-glycero-3-phospho-L-serine + CoA. The catalysed reaction is 1-(9Z-octadecenoyl)-sn-glycero-3-phospho-L-serine + (9Z,12Z)-octadecadienoyl-CoA = 1-(9Z-octadecenoyl)-2-(9Z,12Z-octadienoyl)-sn-glycero-3-phospho-L-serine + CoA. It catalyses the reaction 1-hexadecanoyl-sn-glycero-3-phospho-L-serine + (5Z,8Z,11Z,14Z)-eicosatetraenoyl-CoA = 1-hexadecanoyl-2-(5Z,8Z,11Z,14Z-eicosatetraenoyl)-sn-glycero-3-phospho-L-serine + CoA. It carries out the reaction 1-(9Z-octadecenoyl)-sn-glycero-3-phospho-L-serine + (5Z,8Z,11Z,14Z)-eicosatetraenoyl-CoA = 1-(9Z-octadecenoyl)-2-(5Z,8Z,11Z,14Z-eicosatetraenoyl)-sn-glycero-3-phospho-L-serine + CoA. It functions in the pathway lipid metabolism; phospholipid metabolism. Functionally, lysophospholipid O-acyltransferase (LPLAT) that catalyzes the reacylation step of the phospholipid remodeling process also known as the Lands cycle. Catalyzes transfer of the fatty acyl chain from fatty acyl-CoA to 1-acyl lysophospholipid to form various classes of phospholipids. Converts 1-acyl lysophosphatidylcholine (LPC) into phosphatidylcholine (PC) (LPCAT activity), 1-acyl lysophosphatidylserine (LPS) into phosphatidylserine (PS) (LPSAT activity) and 1-acyl lysophosphatidylethanolamine (LPE) into phosphatidylethanolamine (PE) (LPEAT activity). Favors polyunsaturated fatty acyl-CoAs as acyl donors compared to saturated fatty acyl-CoAs. Has higher activity for LPC acyl acceptors compared to LPEs and LPSs. Can also transfer the fatty acyl chain from fatty acyl-CoA to 1-O-alkyl lysophospholipid or 1-O-alkenyl lysophospholipid with lower efficiency. Acts as a major LPC O-acyltransferase in liver and intestine. As a component of the liver X receptor/NR1H3 or NR1H2 signaling pathway, mainly catalyzes the incorporation of arachidonate into PCs of endoplasmic reticulum (ER) membranes, increasing membrane dynamics and enabling triacylglycerols transfer to nascent very low-density lipoprotein (VLDL) particles. Promotes processing of sterol regulatory protein SREBF1 in hepatocytes, likely by facilitating the translocation of SREBF1-SCAP complex from ER to the Golgi apparatus. Participates in mechanisms by which the liver X receptor/NR1H3 or NR1H2 signaling pathway counteracts lipid-induced ER stress response and inflammation. Down-regulates hepatic inflammation by limiting arachidonic acid availability for synthesis of inflammatory eicosanoids, such as prostaglandins. In enterocytes, acts as a component of a gut-brain feedback loop that coordinates dietary lipid absorption and food intake. Regulates the abundance of PCs containing linoleate and arachidonate in enterocyte membranes, enabling passive diffusion of fatty acids and cholesterol across the membrane for efficient chylomicron assembly. In the intestinal crypt, acts as a component of dietary-responsive phospholipid-cholesterol axis, regulating the biosynthesis of cholesterol and its mitogenic effects on intestinal stem cells. This chain is Lysophospholipid acyltransferase 5 (Lpcat3), found in Rattus norvegicus (Rat).